The sequence spans 103 residues: Large ribosomal subunit protein bL21 (103 aa).

This sequence belongs to the bacterial ribosomal protein bL21 family. Part of the 50S ribosomal subunit. Contacts protein L20.

Its function is as follows. This protein binds to 23S rRNA in the presence of protein L20. The polypeptide is Large ribosomal subunit protein bL21 (Pseudomonas syringae pv. tomato (strain ATCC BAA-871 / DC3000)).